A 670-amino-acid polypeptide reads, in one-letter code: tRNA 5-methylaminomethyl-2-thiouridine biosynthesis bifunctional protein MnmC (670 aa).

Residues 1 to 245 form a tRNA (mnm(5)s(2)U34)-methyltransferase region; it reads MKPIAIQPAS…KREMLTGALS (245 aa). Residues 271–670 form an FAD-dependent cmnm(5)s(2)U34 oxidoreductase region; it reads VGGGIASALL…RKLLKGRAAS (400 aa).

In the N-terminal section; belongs to the methyltransferase superfamily. tRNA (mnm(5)s(2)U34)-methyltransferase family. This sequence in the C-terminal section; belongs to the DAO family. The cofactor is FAD.

The protein resides in the cytoplasm. The catalysed reaction is 5-aminomethyl-2-thiouridine(34) in tRNA + S-adenosyl-L-methionine = 5-methylaminomethyl-2-thiouridine(34) in tRNA + S-adenosyl-L-homocysteine + H(+). Functionally, catalyzes the last two steps in the biosynthesis of 5-methylaminomethyl-2-thiouridine (mnm(5)s(2)U) at the wobble position (U34) in tRNA. Catalyzes the FAD-dependent demodification of cmnm(5)s(2)U34 to nm(5)s(2)U34, followed by the transfer of a methyl group from S-adenosyl-L-methionine to nm(5)s(2)U34, to form mnm(5)s(2)U34. The chain is tRNA 5-methylaminomethyl-2-thiouridine biosynthesis bifunctional protein MnmC from Cronobacter sakazakii (strain ATCC BAA-894) (Enterobacter sakazakii).